The following is a 556-amino-acid chain: Genetic interactor of prohibitins 3, mitochondrial (556 aa).

The transit peptide at methionine 1–lysine 21 directs the protein to the mitochondrion. A CP-type G domain is found at glutamate 113–serine 305.

It belongs to the TRAFAC class YlqF/YawG GTPase family. GEP3 subfamily.

The protein localises to the mitochondrion. Functionally, interacts genetically with prohibitins and thus may be involved in the mitochondrial lipid metabolism. The chain is Genetic interactor of prohibitins 3, mitochondrial (GEP3) from Saccharomyces cerevisiae (strain YJM789) (Baker's yeast).